Here is a 292-residue protein sequence, read N- to C-terminus: Hydroxysqualene synthase (292 aa).

The protein belongs to the phytoene/squalene synthase family. HpnC subfamily.

The catalysed reaction is presqualene diphosphate + H2O = hydroxysqualene + diphosphate. Its pathway is secondary metabolite biosynthesis; hopanoid biosynthesis. In terms of biological role, involved in the biosynthesis of the hopanoid precursor squalene (SQ) from farnesyl diphosphate (FPP). Catalyzes the second step, the conversion of presqualene diphosphate (PSPP) to hydroxysqualene (HSQ). The chain is Hydroxysqualene synthase from Rhodopseudomonas palustris (strain ATCC BAA-98 / CGA009).